Reading from the N-terminus, the 209-residue chain is Probable phosphatidylglycerophosphatase, mitochondrial (209 aa).

Positions 57–61 match the Phosphoryl acceptor motif; the sequence is DKDNC.

The protein belongs to the GEP4 family.

Its subcellular location is the mitochondrion inner membrane. The catalysed reaction is a 1,2-diacyl-sn-glycero-3-phospho-(1'-sn-glycero-3'-phosphate) + H2O = a 1,2-diacyl-sn-glycero-3-phospho-(1'-sn-glycerol) + phosphate. It participates in phospholipid metabolism; phosphatidylglycerol biosynthesis; phosphatidylglycerol from CDP-diacylglycerol: step 2/2. Functionally, phosphatidylglycerophosphatase involved in the biosynthesis of cardiolipin (CL), a unique dimeric phosphoglycerolipid predominantly present in mitochondrial membranes and which has important functions for cellular energy metabolism, mitochondrial dynamics and the initiation of apoptotic pathways. The protein is Probable phosphatidylglycerophosphatase, mitochondrial (gep4) of Schizosaccharomyces pombe (strain 972 / ATCC 24843) (Fission yeast).